Reading from the N-terminus, the 289-residue chain is Serine/threonine-protein phosphatase Pgam5, mitochondrial (289 aa).

The chain crosses the membrane as a helical span at residues F7–L23.

Belongs to the phosphoglycerate mutase family. BPG-dependent PGAM subfamily. Interacts with Pk92B/ASK1.

The protein resides in the mitochondrion outer membrane. It catalyses the reaction O-phospho-L-seryl-[protein] + H2O = L-seryl-[protein] + phosphate. The enzyme catalyses O-phospho-L-threonyl-[protein] + H2O = L-threonyl-[protein] + phosphate. Its function is as follows. Displays phosphatase activity for serine/threonine residues, and dephosphorylates and activates Pk92B kinase. Has apparently no phosphoglycerate mutase activity. The sequence is that of Serine/threonine-protein phosphatase Pgam5, mitochondrial from Drosophila persimilis (Fruit fly).